A 1188-amino-acid chain; its full sequence is Zinc finger SWIM domain-containing protein 5 (1188 aa).

Residues 1–10 show a composition bias toward basic and acidic residues; it reads MAEGGEREEL. 2 disordered regions span residues 1–46 and 123–171; these read MAEG…GAGG and AGAA…TGTA. Low complexity-rich tracts occupy residues 126–136 and 146–155; these read AAGAAGASPVE and AAPAGSAPGA. The span at 156 to 171 shows a compositional bias: gly residues; sequence AGAGSSPGLGAGTGTA. The segment at 222 to 259 adopts an SWIM-type zinc-finger fold; the sequence is YKVAISFDRCKITSVSCGCGNKDIFYCAHVVALSLYRI.

The sequence is that of Zinc finger SWIM domain-containing protein 5 (Zswim5) from Mus musculus (Mouse).